The chain runs to 176 residues: Retinol-binding protein 4-A (176 aa).

S1 carries the post-translational modification N-acetylserine. Cystine bridges form between C3-C159, C69-C173, and C119-C128. A substrate-binding site is contributed by Q97.

It belongs to the calycin superfamily. Lipocalin family.

It is found in the secreted. Functionally, RBP delivers retinol from the liver stores to the peripheral tissues. In plasma, the RBP-retinol complex interacts with transthyretin, this prevents its loss by filtration through the kidney glomeruli. The protein is Retinol-binding protein 4-A (rbp4a) of Oncorhynchus mykiss (Rainbow trout).